The primary structure comprises 354 residues: Ribosomal RNA large subunit methyltransferase M (354 aa).

Residues Ser183, 216–219 (SPGG), Asp235, Asp255, and Asp271 each bind S-adenosyl-L-methionine. The Proton acceptor role is filled by Lys300.

It belongs to the class I-like SAM-binding methyltransferase superfamily. RNA methyltransferase RlmE family. RlmM subfamily. As to quaternary structure, monomer.

The protein resides in the cytoplasm. The catalysed reaction is cytidine(2498) in 23S rRNA + S-adenosyl-L-methionine = 2'-O-methylcytidine(2498) in 23S rRNA + S-adenosyl-L-homocysteine + H(+). Catalyzes the 2'-O-methylation at nucleotide C2498 in 23S rRNA. The chain is Ribosomal RNA large subunit methyltransferase M from Pseudomonas putida (strain GB-1).